A 319-amino-acid chain; its full sequence is Vomeronasal type-1 receptor 96 (319 aa).

At 1–19 (MNKVNILPSDTNIKITLFS) the chain is on the extracellular side. A helical transmembrane segment spans residues 20–40 (EVSVGISANSVLFFAHLCMFF). Residues 41 to 49 (EENRSKPID) are Cytoplasmic-facing. A helical membrane pass occupies residues 50 to 70 (LCIAFLSLTQLMLLVTMGLIA). At 71-93 (ADMFMSQGIWDSTTCRSIIYFHR) the chain is on the extracellular side. An intrachain disulfide couples C85 to C172. Residues 94–114 (LLRGFNLCAACLLHILWTFTL) form a helical membrane-spanning segment. Over 115 to 134 (SPRSSCLTKFKHKSPHHISC) the chain is Cytoplasmic. A helical transmembrane segment spans residues 135 to 155 (AFFSLCVLYMLFSSHLFVLII). The Extracellular portion of the chain corresponds to 156 to 193 (ATSNLTSDHFMYVTQSCSILPMSYSRTTMFSLVMVTRE). N-linked (GlcNAc...) asparagine glycosylation occurs at N159. A helical transmembrane segment spans residues 194–214 (AFLISLMALFSGYMVTLLWRH). Topologically, residues 215–238 (KKQVQHLHSTSLSSKSSPQQRATR) are cytoplasmic. Residues 239–259 (TILLLMSFFVVLYILDIVIFQ) traverse the membrane as a helical segment. Residues 260–269 (SRTKFKDGSM) are Extracellular-facing. The chain crosses the membrane as a helical span at residues 270-290 (FYSLHIIVSHSYATISPFVFI). The Cytoplasmic portion of the chain corresponds to 291–319 (FSDKRIIKFLGSMSGRIINICLFSDGYGP).

This sequence belongs to the G-protein coupled receptor 1 family.

It localises to the cell membrane. Putative pheromone receptor implicated in the regulation of social as well as reproductive behavior. The sequence is that of Vomeronasal type-1 receptor 96 (Vom1r96) from Rattus norvegicus (Rat).